Reading from the N-terminus, the 184-residue chain is MKLILASKSPRRIELLTQAGYKFEIIPAQKDEKTAYKTPHRMVKDLALKKAFEVAAKYPASTVVGADTLVYCKGRVIGKPKDKADALKILHLLNNSWQTVYTGVAIVNINKKKLFTGYAATKCKARKLSDTELKLISGKHMDKAGAYAMQDKDDMLIERVEGSLTNVIGMPMELFNKMIKEFGF.

Aspartate 67 acts as the Proton acceptor in catalysis.

The protein belongs to the Maf family. YhdE subfamily. It depends on a divalent metal cation as a cofactor.

The protein resides in the cytoplasm. It carries out the reaction dTTP + H2O = dTMP + diphosphate + H(+). The catalysed reaction is UTP + H2O = UMP + diphosphate + H(+). Functionally, nucleoside triphosphate pyrophosphatase that hydrolyzes dTTP and UTP. May have a dual role in cell division arrest and in preventing the incorporation of modified nucleotides into cellular nucleic acids. The sequence is that of dTTP/UTP pyrophosphatase from Elusimicrobium minutum (strain Pei191).